A 361-amino-acid polypeptide reads, in one-letter code: Putative pumilio homolog 22 (361 aa).

The 344-residue stretch at 5–348 (RGYDLASQVL…NIVAIIDSET (344 aa)) folds into the PUM-HD domain. Pumilio repeat units follow at residues 27 to 63 (HITY…EFLD) and 64 to 103 (LIAQ…RLHE). The Pumilio 3; degenerate repeat unit spans residues 104–131 (LMAEFDEVLSTSVTADVDKLHKLASKLM). The stretch at 132–167 (LDSDLFFEFVITRRGSLMIQIILGKSEEVDQVILAG) is one Pumilio 4 repeat. The Pumilio 5; degenerate repeat unit spans residues 168-205 (VKQRFIDVTTNFYGYRIMIQTIKVFKKRGDLKVYDQIL). Residues 206-243 (RLIGVHALYLTKDPDMGNKTFQHAINLHHQDCTTFIAC) form a Pumilio 6; degenerate repeat. Pumilio repeat units lie at residues 244-284 (GLQS…EIVK) and 285-319 (CDED…DFFG).

Its subcellular location is the cytoplasm. Its function is as follows. Sequence-specific RNA-binding protein that regulates translation and mRNA stability by binding the 3'-UTR of target mRNAs. This chain is Putative pumilio homolog 22 (APUM22), found in Arabidopsis thaliana (Mouse-ear cress).